The sequence spans 31 residues: Cyclotide mden-J (31 aa).

Residues 1–31 constitute a cross-link (cyclopeptide (Gly-Asn)); that stretch reads GSIPCGESCVYIPCISSIVGCACKSKVCYKN. 3 disulfides stabilise this stretch: Cys5/Cys21, Cys9/Cys23, and Cys14/Cys28.

Belongs to the cyclotide family. Bracelet subfamily. Post-translationally, this is a cyclic peptide.

In terms of biological role, probably participates in a plant defense mechanism. This chain is Cyclotide mden-J, found in Melicytus dentatus (Tree violet).